Here is a 257-residue protein sequence, read N- to C-terminus: Large ribosomal subunit protein uL2 (257 aa).

The tract at residues 210 to 231 is disordered; it reads PHGGGNHQHIGKASTVKRGTSA.

This sequence belongs to the universal ribosomal protein uL2 family.

The protein resides in the cytoplasm. The polypeptide is Large ribosomal subunit protein uL2 (RpL8) (Mamestra brassicae (Cabbage moth)).